Here is a 125-residue protein sequence, read N- to C-terminus: 17 kDa gas vesicle protein (125 aa).

The protein belongs to the gas vesicle GvpC family.

It is found in the gas vesicle. Gas vesicles (GV) are hollow, gas filled proteinaceous nanostructures. During planktonic growth they allow positioning of the organism at a favorable depth for light or nutrient acquisition. The protein is 17 kDa gas vesicle protein of Dactylococcopsis salina (strain PCC 8305) (Myxobactron salinum).